The sequence spans 219 residues: 2-C-methyl-D-erythritol 4-phosphate cytidylyltransferase (219 aa).

This sequence belongs to the IspD/TarI cytidylyltransferase family. IspD subfamily.

It catalyses the reaction 2-C-methyl-D-erythritol 4-phosphate + CTP + H(+) = 4-CDP-2-C-methyl-D-erythritol + diphosphate. Its pathway is isoprenoid biosynthesis; isopentenyl diphosphate biosynthesis via DXP pathway; isopentenyl diphosphate from 1-deoxy-D-xylulose 5-phosphate: step 2/6. In terms of biological role, catalyzes the formation of 4-diphosphocytidyl-2-C-methyl-D-erythritol from CTP and 2-C-methyl-D-erythritol 4-phosphate (MEP). The chain is 2-C-methyl-D-erythritol 4-phosphate cytidylyltransferase from Chlamydia trachomatis serovar L2 (strain ATCC VR-902B / DSM 19102 / 434/Bu).